Reading from the N-terminus, the 256-residue chain is ATP synthase peripheral stalk subunit b, mitochondrial (256 aa).

Residues 1–42 (MLSRVVLSAAAAAAPSLKNAALLGPGVLQATRIFHTGQPSLA) constitute a mitochondrion transit peptide. Position 131 is an N6-succinyllysine (Lys131). Lys139, Lys154, Lys162, Lys221, Lys233, and Lys244 each carry N6-acetyllysine.

The protein belongs to the eukaryotic ATPase B chain family. In terms of assembly, component of the ATP synthase complex composed at least of ATP5F1A/subunit alpha, ATP5F1B/subunit beta, ATP5MC1/subunit c (homooctomer), MT-ATP6/subunit a, MT-ATP8/subunit 8, ATP5ME/subunit e, ATP5MF/subunit f, ATP5MG/subunit g, ATP5MK/subunit k, ATP5MJ/subunit j, ATP5F1C/subunit gamma, ATP5F1D/subunit delta, ATP5F1E/subunit epsilon, ATP5PF/subunit F6, ATP5PB/subunit b, ATP5PD/subunit d, ATP5PO/subunit OSCP. ATP synthase complex consists of a soluble F(1) head domain (subunits alpha(3) and beta(3)) - the catalytic core - and a membrane F(0) domain - the membrane proton channel (subunits c, a, 8, e, f, g, k and j). These two domains are linked by a central stalk (subunits gamma, delta, and epsilon) rotating inside the F1 region and a stationary peripheral stalk (subunits F6, b, d, and OSCP).

It is found in the mitochondrion. It localises to the mitochondrion inner membrane. Functionally, subunit b, of the mitochondrial membrane ATP synthase complex (F(1)F(0) ATP synthase or Complex V) that produces ATP from ADP in the presence of a proton gradient across the membrane which is generated by electron transport complexes of the respiratory chain. ATP synthase complex consist of a soluble F(1) head domain - the catalytic core - and a membrane F(1) domain - the membrane proton channel. These two domains are linked by a central stalk rotating inside the F(1) region and a stationary peripheral stalk. During catalysis, ATP synthesis in the catalytic domain of F(1) is coupled via a rotary mechanism of the central stalk subunits to proton translocation. In vivo, can only synthesize ATP although its ATP hydrolase activity can be activated artificially in vitro. Part of the complex F(0) domain. Part of the complex F(0) domain and the peripheric stalk, which acts as a stator to hold the catalytic alpha(3)beta(3) subcomplex and subunit a/ATP6 static relative to the rotary elements. The chain is ATP synthase peripheral stalk subunit b, mitochondrial from Bos taurus (Bovine).